The following is a 620-amino-acid chain: 1-deoxy-D-xylulose-5-phosphate synthase (620 aa).

Thiamine diphosphate is bound by residues H80 and 121 to 123; that span reads GHS. Residue D152 participates in Mg(2+) binding. Residues 153-154, N181, Y288, and E370 contribute to the thiamine diphosphate site; that span reads GA. Residue N181 coordinates Mg(2+).

The protein belongs to the transketolase family. DXPS subfamily. In terms of assembly, homodimer. Mg(2+) is required as a cofactor. The cofactor is thiamine diphosphate.

The enzyme catalyses D-glyceraldehyde 3-phosphate + pyruvate + H(+) = 1-deoxy-D-xylulose 5-phosphate + CO2. Its pathway is metabolic intermediate biosynthesis; 1-deoxy-D-xylulose 5-phosphate biosynthesis; 1-deoxy-D-xylulose 5-phosphate from D-glyceraldehyde 3-phosphate and pyruvate: step 1/1. In terms of biological role, catalyzes the acyloin condensation reaction between C atoms 2 and 3 of pyruvate and glyceraldehyde 3-phosphate to yield 1-deoxy-D-xylulose-5-phosphate (DXP). In Photobacterium profundum (strain SS9), this protein is 1-deoxy-D-xylulose-5-phosphate synthase.